A 125-amino-acid polypeptide reads, in one-letter code: Cardioactive peptide (125 aa).

An N-terminal signal peptide occupies residues 1-22 (MTVSRVCLLLLVALVYLDCCYA). The propeptide occupies 23–42 (ASIPRNFDPRLSEEIVMAPK). The cysteines at positions 47 and 53 are disulfide-linked. At C53 the chain carries Cysteine amide. Residues 57–125 (RSQGPPGMPA…RRKQKEAYIQ (69 aa)) constitute a propeptide that is removed on maturation.

Abdominal perivisceral organ; major neurohemal release site. Expressed in 116 neurons in post-embryonic central nervous system. Nine pairs of cells are observed in the brain, 4.5 pairs in the subesophageal ganglion, three pairs in each thoracic ganglion (T1-T3), three pairs in the first abdominal ganglion (A1), five pairs each in the second to sixth abdominal ganglia (A2-A6) and 7.5 pairs in the terminal ganglion. Expressed in every ganglion in each post-embryonic stage, except in the thoracic ganglia of first- and second-instar larvae. Colocalizes with CAP2b in median neurosecretory cells during the last larval instar through to adults.

The protein resides in the secreted. In terms of biological role, cardioregulatory neurohormone that increases heart beat rate during adult wing inflation; has no effect on beat amplitude. The effect of CCAP is both ino- and chronotropic. The protein is Cardioactive peptide of Manduca sexta (Tobacco hawkmoth).